Consider the following 450-residue polypeptide: Phosphoglucosamine mutase (450 aa).

The active-site Phosphoserine intermediate is S101. Residues S101, D241, D243, and D245 each contribute to the Mg(2+) site. The residue at position 101 (S101) is a Phosphoserine.

This sequence belongs to the phosphohexose mutase family. It depends on Mg(2+) as a cofactor. Post-translationally, activated by phosphorylation.

It carries out the reaction alpha-D-glucosamine 1-phosphate = D-glucosamine 6-phosphate. Its function is as follows. Catalyzes the conversion of glucosamine-6-phosphate to glucosamine-1-phosphate. This Listeria innocua serovar 6a (strain ATCC BAA-680 / CLIP 11262) protein is Phosphoglucosamine mutase.